Here is a 104-residue protein sequence, read N- to C-terminus: Large ribosomal subunit protein uL24 (104 aa).

This sequence belongs to the universal ribosomal protein uL24 family. In terms of assembly, part of the 50S ribosomal subunit.

In terms of biological role, one of two assembly initiator proteins, it binds directly to the 5'-end of the 23S rRNA, where it nucleates assembly of the 50S subunit. Functionally, one of the proteins that surrounds the polypeptide exit tunnel on the outside of the subunit. The chain is Large ribosomal subunit protein uL24 from Bradyrhizobium sp. (strain BTAi1 / ATCC BAA-1182).